Reading from the N-terminus, the 253-residue chain is 5'-nucleotidase SurE (253 aa).

4 residues coordinate a divalent metal cation: aspartate 8, aspartate 9, serine 40, and asparagine 92.

It belongs to the SurE nucleotidase family. A divalent metal cation is required as a cofactor.

It is found in the cytoplasm. It catalyses the reaction a ribonucleoside 5'-phosphate + H2O = a ribonucleoside + phosphate. Functionally, nucleotidase that shows phosphatase activity on nucleoside 5'-monophosphates. The polypeptide is 5'-nucleotidase SurE (Hyphomonas neptunium (strain ATCC 15444)).